The primary structure comprises 429 residues: Histidinol dehydrogenase (429 aa).

Positions 127, 188, and 211 each coordinate NAD(+). Substrate-binding residues include serine 234, glutamine 256, and histidine 259. The Zn(2+) site is built by glutamine 256 and histidine 259. Residues glutamate 324 and histidine 325 each act as proton acceptor in the active site. Substrate is bound by residues histidine 325, aspartate 358, glutamate 412, and histidine 417. Residue aspartate 358 participates in Zn(2+) binding. Position 417 (histidine 417) interacts with Zn(2+).

Belongs to the histidinol dehydrogenase family. It depends on Zn(2+) as a cofactor.

It carries out the reaction L-histidinol + 2 NAD(+) + H2O = L-histidine + 2 NADH + 3 H(+). It functions in the pathway amino-acid biosynthesis; L-histidine biosynthesis; L-histidine from 5-phospho-alpha-D-ribose 1-diphosphate: step 9/9. Catalyzes the sequential NAD-dependent oxidations of L-histidinol to L-histidinaldehyde and then to L-histidine. In Bacillus thuringiensis subsp. konkukian (strain 97-27), this protein is Histidinol dehydrogenase.